We begin with the raw amino-acid sequence, 118 residues long: Na(+)/H(+) antiporter subunit G1 (118 aa).

Helical transmembrane passes span 9-29 (LAVIFVILGAIISAVTAIGII), 47-67 (LGAIFLLFGTFLYFIATDGYI), and 69-89 (MQLIFGILFILITGPLSSHLI).

The protein belongs to the CPA3 antiporters (TC 2.A.63) subunit G family. In terms of assembly, may form a heterooligomeric complex that consists of seven subunits: mnhA1, mnhB1, mnhC1, mnhD1, mnhE1, mnhF1 and mnhG1.

It localises to the cell membrane. Mnh complex is a Na(+)/H(+) antiporter involved in Na(+) excretion. The protein is Na(+)/H(+) antiporter subunit G1 (mnhG1) of Staphylococcus haemolyticus (strain JCSC1435).